The chain runs to 358 residues: MTPPPPKRQKRDEYRKATAEATSQSGASDVAEIKLPKKKYYRQRAHANPFSDHHLKYPLSPAHMDWSSHYPAFVNPDPSHINLAGARRLLKDVEVVDIGCGFGGLLIGLAPLLPESLIVGMEIRVSVLEYVTTRIQALRAQQQKLRAATATATAASETPSQQQAQIDGKQANANAAADAASPAPSTDTEHMPTTLVPGSYENISAIRSNTMKFFPNFFARHQLSKIFICFPDPHFKARKHKARIISETLNAEYAYALRPGGLLYTITDVEEYHHWILRHFGVELGAEEESEEKSTSPNANANAGVRELFERVSEEELEKDECVRVMKEATEEGKKVARNKGNKYVAVFRRKTDPEWPA.

Positions Met1–Asp29 are disordered. S-adenosyl-L-methionine contacts are provided by residues Gly99 and Glu122–Ile123. The segment covering Thr151–Thr186 has biased composition (low complexity). The interval Thr151–Thr194 is disordered. S-adenosyl-L-methionine-binding positions include Asn209 to Thr210 and Cys229. Asp232 is an active-site residue. Position 330–332 (Thr330–Glu332) interacts with S-adenosyl-L-methionine.

It belongs to the class I-like SAM-binding methyltransferase superfamily. TrmB family. Forms a complex with trm82.

The protein resides in the nucleus. It catalyses the reaction guanosine(46) in tRNA + S-adenosyl-L-methionine = N(7)-methylguanosine(46) in tRNA + S-adenosyl-L-homocysteine. Its pathway is tRNA modification; N(7)-methylguanine-tRNA biosynthesis. Its function is as follows. Catalyzes the formation of N(7)-methylguanine at position 46 (m7G46) in tRNA. The sequence is that of tRNA (guanine-N(7)-)-methyltransferase (trm8) from Aspergillus fumigatus (strain ATCC MYA-4609 / CBS 101355 / FGSC A1100 / Af293) (Neosartorya fumigata).